We begin with the raw amino-acid sequence, 293 residues long: 4-hydroxy-tetrahydrodipicolinate synthase (293 aa).

Thr46 is a pyruvate binding site. Tyr133 (proton donor/acceptor) is an active-site residue. Residue Lys161 is the Schiff-base intermediate with substrate of the active site. Residue Val202 participates in pyruvate binding.

Belongs to the DapA family. Homotetramer; dimer of dimers.

It localises to the cytoplasm. It carries out the reaction L-aspartate 4-semialdehyde + pyruvate = (2S,4S)-4-hydroxy-2,3,4,5-tetrahydrodipicolinate + H2O + H(+). It functions in the pathway amino-acid biosynthesis; L-lysine biosynthesis via DAP pathway; (S)-tetrahydrodipicolinate from L-aspartate: step 3/4. In terms of biological role, catalyzes the condensation of (S)-aspartate-beta-semialdehyde [(S)-ASA] and pyruvate to 4-hydroxy-tetrahydrodipicolinate (HTPA). The polypeptide is 4-hydroxy-tetrahydrodipicolinate synthase (Wolbachia pipientis wMel).